We begin with the raw amino-acid sequence, 796 residues long: Pleckstrin homology domain-containing family H member 3 (796 aa).

The signal sequence occupies residues 1–18 (MPLPGGLWWLLCCRRGFT). The disordered stretch occupies residues 28–71 (ELSGDGDEDEDDETFELRTPSPAGGGRGSLDVTLTQPTRNGPIS). Residues 29-41 (LSGDGDEDEDDET) show a composition bias toward acidic residues. Phosphoserine is present on S30. Polar residues predominate over residues 59-68 (VTLTQPTRNG). Residues 95–199 (DIIVKGWLYR…WGVALREVIA (105 aa)) enclose the PH domain. The region spanning 237 to 399 (HTSSALYAPL…PSLAEISALS (163 aa)) is the MyTH4 domain. The FERM domain occupies 404-757 (LLCTVHCPGA…ANPSPERPCR (354 aa)). An N-linked (GlcNAc...) asparagine glycan is attached at N474. Disordered regions lie at residues 557–584 (PLLDRLLPPPIPPREQPPCPTRRPPPSA) and 598–625 (KRRAERARRGGTGRSTGSTAQVGGGGAS). The span at 563-583 (LPPPIPPREQPPCPTRRPPPS) shows a compositional bias: pro residues. Basic residues predominate over residues 598 to 608 (KRRAERARRGG). Omega-N-methylarginine is present on R638. Positions 750–796 (PSPERPCRSGSSSGPPSQDLPDTSPPSQHQVLEEPQGQSGCLKQLQD) are disordered. A compositionally biased stretch (low complexity) spans 757 to 766 (RSGSSSGPPS). The span at 774-796 (PPSQHQVLEEPQGQSGCLKQLQD) shows a compositional bias: polar residues.

The polypeptide is Pleckstrin homology domain-containing family H member 3 (Plekhh3) (Mus musculus (Mouse)).